Reading from the N-terminus, the 409-residue chain is NADH-quinone oxidoreductase subunit D (409 aa).

It belongs to the complex I 49 kDa subunit family. In terms of assembly, NDH-1 is composed of 14 different subunits. Subunits NuoB, C, D, E, F, and G constitute the peripheral sector of the complex.

The protein resides in the cell inner membrane. It catalyses the reaction a quinone + NADH + 5 H(+)(in) = a quinol + NAD(+) + 4 H(+)(out). In terms of biological role, NDH-1 shuttles electrons from NADH, via FMN and iron-sulfur (Fe-S) centers, to quinones in the respiratory chain. The immediate electron acceptor for the enzyme in this species is believed to be ubiquinone. Couples the redox reaction to proton translocation (for every two electrons transferred, four hydrogen ions are translocated across the cytoplasmic membrane), and thus conserves the redox energy in a proton gradient. The chain is NADH-quinone oxidoreductase subunit D from Sulfurovum sp. (strain NBC37-1).